The following is a 144-amino-acid chain: Interferon-induced transmembrane protein 2 (144 aa).

N-acetylmethionine is present on M1. The Cytoplasmic segment spans residues 1–56 (MSHNSQAFLSTNAGLPPSYETIKEEYGVTELGEPSNSAVVRTTVINMPREVSVPDH). Y19 carries the post-translational modification Phosphotyrosine. Residues 57–77 (VVWSLFNTLFFNACCLGFVAY) constitute an intramembrane region (helical). Residues C70, C71, and C104 are each lipidated (S-palmitoyl cysteine). The Cytoplasmic segment spans residues 78-110 (AYSVKSRDRKMVGDVVGAQAYASTAKCLNISSL). A helical membrane pass occupies residues 111–131 (IFSILMVIICIIIFSTTSVVV). The Extracellular portion of the chain corresponds to 132–144 (FQSFAQRTPHSGF).

This sequence belongs to the CD225/Dispanin family. In terms of assembly, interacts with CD81. Post-translationally, palmitoylation on membrane-proximal cysteines controls clustering in membrane compartments and antiviral activity. In terms of processing, phosphorylation at Tyr-19 is required for endosomal and lysosomal location. As to expression, predominantly expressed in nascent primordial germ cells, as well as in gonadal germ cells.

It is found in the cell membrane. It localises to the lysosome membrane. The protein localises to the late endosome membrane. IFN-induced antiviral protein which inhibits the entry of viruses to the host cell cytoplasm, permitting endocytosis, but preventing subsequent viral fusion and release of viral contents into the cytosol. Active against multiple viruses, including influenza A virus, SARS coronavirus (SARS-CoV), Marburg virus (MARV) and Ebola virus (EBOV), Dengue virus (DNV) and West Nile virus (WNV). Can inhibit: influenza virus hemagglutinin protein-mediated viral entry, MARV and EBOV GP1,2-mediated viral entry and SARS-CoV S protein-mediated viral entry. Induces cell cycle arrest and mediates apoptosis by caspase activation and in p53-independent manner. The chain is Interferon-induced transmembrane protein 2 (Ifitm2) from Mus musculus (Mouse).